The sequence spans 551 residues: E3 ubiquitin-protein ligase HEL1 (551 aa).

A TRIAD supradomain region spans residues Asn-175–Lys-388. Residues Cys-179, Cys-182, Cys-200, Cys-203, Cys-301, Cys-304, His-309, Cys-314, Cys-341, and Cys-344 each coordinate Zn(2+). Residues Cys-179–Leu-225 form an RING-type 1 zinc finger. Residues Ser-242–Cys-314 form an IBR-type zinc finger. The RING-type 2; atypical zinc-finger motif lies at Cys-341–Cys-370. Cys-354 is an active-site residue. The Zn(2+) site is built by Cys-359, Cys-362, Cys-367, Cys-370, His-377, and Cys-384.

The protein belongs to the RBR family. As to quaternary structure, interacts with the E2 ubiquitin-conjugating enzyme UBC4 and histones H3 and H4.

It carries out the reaction [E2 ubiquitin-conjugating enzyme]-S-ubiquitinyl-L-cysteine + [acceptor protein]-L-lysine = [E2 ubiquitin-conjugating enzyme]-L-cysteine + [acceptor protein]-N(6)-ubiquitinyl-L-lysine.. It participates in protein modification; protein ubiquitination. Functionally, probable ubiquitin-protein ligase involved in the degradation-related ubiquitination of histones. Contributes to the post-translational regulation of histone protein levels by polyubiquitination of excess histones for subsequent degradation. The protein is E3 ubiquitin-protein ligase HEL1 of Saccharomyces cerevisiae (strain ATCC 204508 / S288c) (Baker's yeast).